The primary structure comprises 408 residues: Sprouty-related, EVH1 domain-containing protein 3 (408 aa).

The WH1 domain maps to Met1–Leu113. Residues Leu118 to Pro226 form a disordered region. Over residues Pro120–Ser130 the composition is skewed to low complexity. The 51-residue stretch at Leu192 to Thr242 folds into the KBD domain. Arg238 carries the post-translational modification Asymmetric dimethylarginine. An Omega-N-methylarginine modification is found at Arg246. Residues Leu256 to Ser286 form a disordered region. A compositionally biased stretch (pro residues) spans Pro265–Ala281. The region spanning Arg294–Glu405 is the SPR domain.

In terms of assembly, interacts with palmitoyltransferase ZDHHC17/HIP14; the interaction leads to palmitoylation of SPRED3. Phosphorylated on tyrosine. Post-translationally, palmitoylated by ZDHHC17/HIP14. In terms of processing, ubiquitinated. In terms of tissue distribution, brain specific.

It is found in the cell membrane. Functionally, tyrosine kinase substrate that inhibits growth-factor-mediated activation of MAP kinase. Inhibits fibroblast growth factor (FGF)-induced retinal lens fiber differentiation, probably by inhibiting FGF-mediated phosphorylation of ERK1/2. Inhibits TGFB-induced epithelial-to-mesenchymal transition in lens epithelial cells. The sequence is that of Sprouty-related, EVH1 domain-containing protein 3 (Spred3) from Mus musculus (Mouse).